A 354-amino-acid chain; its full sequence is Biotin synthase (354 aa).

In terms of domain architecture, Radical SAM core spans 40–258 (NEVQVSTLLS…IAVARILMPR (219 aa)). Residues cysteine 55, cysteine 59, and cysteine 62 each contribute to the [4Fe-4S] cluster site. 4 residues coordinate [2Fe-2S] cluster: cysteine 99, cysteine 130, cysteine 190, and arginine 262.

Belongs to the radical SAM superfamily. Biotin synthase family. In terms of assembly, homodimer. [4Fe-4S] cluster serves as cofactor. It depends on [2Fe-2S] cluster as a cofactor.

It carries out the reaction (4R,5S)-dethiobiotin + (sulfur carrier)-SH + 2 reduced [2Fe-2S]-[ferredoxin] + 2 S-adenosyl-L-methionine = (sulfur carrier)-H + biotin + 2 5'-deoxyadenosine + 2 L-methionine + 2 oxidized [2Fe-2S]-[ferredoxin]. It participates in cofactor biosynthesis; biotin biosynthesis; biotin from 7,8-diaminononanoate: step 2/2. Its function is as follows. Catalyzes the conversion of dethiobiotin (DTB) to biotin by the insertion of a sulfur atom into dethiobiotin via a radical-based mechanism. The sequence is that of Biotin synthase from Hahella chejuensis (strain KCTC 2396).